The primary structure comprises 365 residues: Zinc finger TRAF-type-containing protein 1-B (365 aa).

Positions 1-56 (MSEEREAPGPLASSSAGLGAEVGQEEVPGGAGPARLLLLPSDSDGPPKKRLRSEAE) are disordered. The RING-type; degenerate zinc-finger motif lies at 72-117 (CAVCLDLPKASVYQCTNGHLMCAGCFIHLLADARLKEEQATCPNCR). Residues 113 to 186 (CPNCRCEISK…PWQGPYHELT (74 aa)) form a TRAF-type zinc finger.

The protein belongs to the ZFTRAF1 family. Interacts with LGALS3.

The protein resides in the cytoplasm. This chain is Zinc finger TRAF-type-containing protein 1-B, found in Xenopus laevis (African clawed frog).